The chain runs to 272 residues: 4-hydroxy-tetrahydrodipicolinate reductase (272 aa).

NAD(+) contacts are provided by residues 11-16 (GAGGRM) and Glu37. NADP(+) is bound at residue Arg38. Residues 101–103 (GTT) and 125–128 (AANF) each bind NAD(+). The active-site Proton donor/acceptor is the His158. His159 is a (S)-2,3,4,5-tetrahydrodipicolinate binding site. Lys162 acts as the Proton donor in catalysis. 168-169 (GT) is a binding site for (S)-2,3,4,5-tetrahydrodipicolinate.

This sequence belongs to the DapB family. Homotetramer.

Its subcellular location is the cytoplasm. The enzyme catalyses (S)-2,3,4,5-tetrahydrodipicolinate + NAD(+) + H2O = (2S,4S)-4-hydroxy-2,3,4,5-tetrahydrodipicolinate + NADH + H(+). It catalyses the reaction (S)-2,3,4,5-tetrahydrodipicolinate + NADP(+) + H2O = (2S,4S)-4-hydroxy-2,3,4,5-tetrahydrodipicolinate + NADPH + H(+). It functions in the pathway amino-acid biosynthesis; L-lysine biosynthesis via DAP pathway; (S)-tetrahydrodipicolinate from L-aspartate: step 4/4. In terms of biological role, catalyzes the conversion of 4-hydroxy-tetrahydrodipicolinate (HTPA) to tetrahydrodipicolinate. The chain is 4-hydroxy-tetrahydrodipicolinate reductase from Edwardsiella ictaluri (strain 93-146).